The primary structure comprises 246 residues: Aliphatic sulfonates import ATP-binding protein SsuB 2 (246 aa).

One can recognise an ABC transporter domain in the interval 4–218 (VTVRGLRRAF…RRDPRFEQAR (215 aa)). 36-43 (GRSGGGKT) lines the ATP pocket.

This sequence belongs to the ABC transporter superfamily. Aliphatic sulfonates importer (TC 3.A.1.17.2) family. The complex is composed of two ATP-binding proteins (SsuB), two transmembrane proteins (SsuC) and a solute-binding protein (SsuA).

It is found in the cell membrane. It catalyses the reaction ATP + H2O + aliphatic sulfonate-[sulfonate-binding protein]Side 1 = ADP + phosphate + aliphatic sulfonateSide 2 + [sulfonate-binding protein]Side 1.. Functionally, part of the ABC transporter complex SsuABC involved in aliphatic sulfonates import. Responsible for energy coupling to the transport system. The sequence is that of Aliphatic sulfonates import ATP-binding protein SsuB 2 from Frankia alni (strain DSM 45986 / CECT 9034 / ACN14a).